The sequence spans 202 residues: dITP/XTP pyrophosphatase (202 aa).

7–12 serves as a coordination point for substrate; that stretch reads SNNPGK. Residues Glu-39 and Asp-68 each contribute to the Mg(2+) site. Catalysis depends on Asp-68, which acts as the Proton acceptor. Substrate-binding positions include Ala-69, 157 to 160, Lys-180, and 185 to 186; these read FGFD and HR.

It belongs to the HAM1 NTPase family. As to quaternary structure, homodimer. Mg(2+) serves as cofactor.

It catalyses the reaction XTP + H2O = XMP + diphosphate + H(+). It carries out the reaction dITP + H2O = dIMP + diphosphate + H(+). The enzyme catalyses ITP + H2O = IMP + diphosphate + H(+). Its function is as follows. Pyrophosphatase that catalyzes the hydrolysis of nucleoside triphosphates to their monophosphate derivatives, with a high preference for the non-canonical purine nucleotides XTP (xanthosine triphosphate), dITP (deoxyinosine triphosphate) and ITP. Seems to function as a house-cleaning enzyme that removes non-canonical purine nucleotides from the nucleotide pool, thus preventing their incorporation into DNA/RNA and avoiding chromosomal lesions. This is dITP/XTP pyrophosphatase from Polaromonas naphthalenivorans (strain CJ2).